The chain runs to 189 residues: Threonylcarbamoyl-AMP synthase (189 aa).

Residues 7-189 (NFTVKGLTEQ…DAITGKIIRK (183 aa)) enclose the YrdC-like domain.

Belongs to the SUA5 family. TsaC subfamily.

Its subcellular location is the cytoplasm. It carries out the reaction L-threonine + hydrogencarbonate + ATP = L-threonylcarbamoyladenylate + diphosphate + H2O. Functionally, required for the formation of a threonylcarbamoyl group on adenosine at position 37 (t(6)A37) in tRNAs that read codons beginning with adenine. Catalyzes the conversion of L-threonine, HCO(3)(-)/CO(2) and ATP to give threonylcarbamoyl-AMP (TC-AMP) as the acyladenylate intermediate, with the release of diphosphate. The polypeptide is Threonylcarbamoyl-AMP synthase (Blochmanniella floridana).